We begin with the raw amino-acid sequence, 354 residues long: Probable calcium-binding protein CML50 (354 aa).

Low complexity-rich tracts occupy residues 1–10 (MSGYPPTSQG) and 28–71 (YSSG…SSYG). The interval 1 to 159 (MSGYPPTSQG…PASSGHGGGY (159 aa)) is disordered. Positions 72–81 (APPPSAPYAP) are enriched in pro residues. The span at 106 to 117 (GSSDYGSYGAGP) shows a compositional bias: low complexity. EF-hand domains follow at residues 183–218 (GTDP…YQQR) and 249–284 (YSLQ…LGFS). Asp196, Asp198, Ser200, Glu207, Asp262, Asp264, Ser266, Arg268, and Glu273 together coordinate Ca(2+).

Its function is as follows. Potential calcium sensor. In Arabidopsis thaliana (Mouse-ear cress), this protein is Probable calcium-binding protein CML50 (CML50).